Consider the following 352-residue polypeptide: Protein-glutamate methylesterase/protein-glutamine glutaminase (352 aa).

The 118-residue stretch at 4-121 (RVLIVDDSAT…YDGIDEIQKE (118 aa)) folds into the Response regulatory domain. Aspartate 55 carries the 4-aspartylphosphate modification. A CheB-type methylesterase domain is found at 159–351 (AQTTNKLIAI…VKIASLLSER (193 aa)). Active-site residues include serine 171, histidine 197, and aspartate 293.

This sequence belongs to the CheB family. Phosphorylated by CheA. Phosphorylation of the N-terminal regulatory domain activates the methylesterase activity.

It is found in the cytoplasm. The catalysed reaction is [protein]-L-glutamate 5-O-methyl ester + H2O = L-glutamyl-[protein] + methanol + H(+). It catalyses the reaction L-glutaminyl-[protein] + H2O = L-glutamyl-[protein] + NH4(+). Its function is as follows. Involved in chemotaxis. Part of a chemotaxis signal transduction system that modulates chemotaxis in response to various stimuli. Catalyzes the demethylation of specific methylglutamate residues introduced into the chemoreceptors (methyl-accepting chemotaxis proteins or MCP) by CheR. Also mediates the irreversible deamidation of specific glutamine residues to glutamic acid. The chain is Protein-glutamate methylesterase/protein-glutamine glutaminase from Sulfurimonas denitrificans (strain ATCC 33889 / DSM 1251) (Thiomicrospira denitrificans (strain ATCC 33889 / DSM 1251)).